We begin with the raw amino-acid sequence, 625 residues long: Probable potassium transport system protein Kup (625 aa).

A run of 12 helical transmembrane segments spans residues 13 to 33, 53 to 73, 103 to 123, 141 to 161, 172 to 192, 206 to 226, 250 to 270, 282 to 302, 340 to 360, 369 to 389, 400 to 420, and 422 to 442; these read TALA…LYAL, ILSI…VAIV, IYMI…GIIT, VFDP…FLVQ, FGPI…HSVI, AIQF…AVVL, WFFV…ALLL, LLVP…ATVI, IYVP…ILIF, AYGL…AVFI, VLIL…ATSL, and ILSG…ILMT.

Belongs to the HAK/KUP transporter (TC 2.A.72) family.

Its subcellular location is the cell inner membrane. It carries out the reaction K(+)(in) + H(+)(in) = K(+)(out) + H(+)(out). In terms of biological role, transport of potassium into the cell. Likely operates as a K(+):H(+) symporter. The chain is Probable potassium transport system protein Kup from Acinetobacter baumannii (strain SDF).